The following is an 83-amino-acid chain: Evasin P1124 (83 aa).

An N-terminal signal peptide occupies residues 1–28 (MAVNVFTILQLAVFAAIVLNVNLHSVSA). Intrachain disulfides connect Cys48/Cys66, Cys52/Cys68, and Cys62/Cys79. N-linked (GlcNAc...) asparagine glycosylation is present at Asn51.

It localises to the secreted. Functionally, salivary chemokine-binding protein which binds to host chemokines CXCL1, CXCL2, CXCL3, CXCL5, CXCL6, CXCL12 and CXCL13. The chain is Evasin P1124 from Ixodes ricinus (Common tick).